We begin with the raw amino-acid sequence, 350 residues long: Heat-inducible transcription repressor HrcA (350 aa).

Belongs to the HrcA family.

Negative regulator of class I heat shock genes (grpE-dnaK-dnaJ and groELS operons). Prevents heat-shock induction of these operons. This is Heat-inducible transcription repressor HrcA from Xanthomonas euvesicatoria pv. vesicatoria (strain 85-10) (Xanthomonas campestris pv. vesicatoria).